The primary structure comprises 162 residues: Mitochondrial intermembrane space import and assembly protein 40 homolog (162 aa).

A disordered region spans residues 1-61; that stretch reads MGQAQSDENS…DNENESLEAK (61 aa). Residues 9-18 show a composition bias toward low complexity; sequence NSIPTTTTTN. Cystine bridges form between Cys68–Cys70, Cys79–Cys112, and Cys89–Cys102. The CHCH domain maps to 76–120; sequence NGSCGSQFSEAFLCFLKSTAEEKGSDCVNPFVALQSCINANPDAF. Short sequence motifs (cx9C motif) lie at residues 79–89 and 102–112; these read CGSQFSEAFLC and CVNPFVALQSC. Positions 119–162 are disordered; the sequence is AFSKSVTGDEKETEKKEEQPPVQDHRIIPPLWAKDPPRSGNSKL. A compositionally biased stretch (basic and acidic residues) spans 125-145; that stretch reads TGDEKETEKKEEQPPVQDHRI.

The protein resides in the mitochondrion intermembrane space. It is found in the peroxisome matrix. Its function is as follows. Required for the import and folding of small cysteine-containing proteins in the mitochondrial intermembrane space. Involved in the mitochondrial oxidative folding of the copper-zinc superoxide dismutase CSD1, the copper chaperone for superoxide dismutase CCS, and subunits of the mitochondrial membrane respiratory chain NADH dehydrogenase (Complex I). Involved in the peroxisomal oxidative folding of the copper-zinc superoxide dismutase CSD3, and the fatty acid beta-oxidation multifunctional protein AIM1. The polypeptide is Mitochondrial intermembrane space import and assembly protein 40 homolog (Arabidopsis thaliana (Mouse-ear cress)).